The sequence spans 207 residues: Dephospho-CoA kinase (207 aa).

One can recognise a DPCK domain in the interval 12 to 207 (LIGITGMIGG…LYSTLLGKML (196 aa)). 20–25 (GGGKST) serves as a coordination point for ATP.

Belongs to the CoaE family.

Its subcellular location is the cytoplasm. It catalyses the reaction 3'-dephospho-CoA + ATP = ADP + CoA + H(+). Its pathway is cofactor biosynthesis; coenzyme A biosynthesis; CoA from (R)-pantothenate: step 5/5. Catalyzes the phosphorylation of the 3'-hydroxyl group of dephosphocoenzyme A to form coenzyme A. The protein is Dephospho-CoA kinase of Leptospira interrogans serogroup Icterohaemorrhagiae serovar Lai (strain 56601).